A 180-amino-acid chain; its full sequence is Large ribosomal subunit protein uL5c (180 aa).

Belongs to the universal ribosomal protein uL5 family. Part of the 50S ribosomal subunit; contacts the 5S rRNA.

The protein localises to the plastid. It localises to the chloroplast. Functionally, binds 5S rRNA, forms part of the central protuberance of the 50S subunit. In Oedogonium cardiacum (Filamentous green alga), this protein is Large ribosomal subunit protein uL5c (rpl5).